The sequence spans 119 residues: Large ribosomal subunit protein bL20 (119 aa).

Belongs to the bacterial ribosomal protein bL20 family.

Functionally, binds directly to 23S ribosomal RNA and is necessary for the in vitro assembly process of the 50S ribosomal subunit. It is not involved in the protein synthesizing functions of that subunit. The sequence is that of Large ribosomal subunit protein bL20 from Deinococcus geothermalis (strain DSM 11300 / CIP 105573 / AG-3a).